A 613-amino-acid chain; its full sequence is Glutamyl-tRNA(Gln) amidotransferase subunit E (613 aa).

The protein belongs to the GatB/GatE family. GatE subfamily. In terms of assembly, heterodimer of GatD and GatE.

The enzyme catalyses L-glutamyl-tRNA(Gln) + L-glutamine + ATP + H2O = L-glutaminyl-tRNA(Gln) + L-glutamate + ADP + phosphate + H(+). In terms of biological role, allows the formation of correctly charged Gln-tRNA(Gln) through the transamidation of misacylated Glu-tRNA(Gln) in organisms which lack glutaminyl-tRNA synthetase. The reaction takes place in the presence of glutamine and ATP through an activated gamma-phospho-Glu-tRNA(Gln). The GatDE system is specific for glutamate and does not act on aspartate. This Archaeoglobus fulgidus (strain ATCC 49558 / DSM 4304 / JCM 9628 / NBRC 100126 / VC-16) protein is Glutamyl-tRNA(Gln) amidotransferase subunit E.